A 245-amino-acid polypeptide reads, in one-letter code: Eukaryotic translation initiation factor 6 (245 aa).

Y113 carries the phosphotyrosine modification. The residue at position 165 (T165) is a Phosphothreonine. S166 is subject to Phosphoserine. Phosphoserine; by CK1 is present on residues S174 and S175. A Phosphoserine; by PKC modification is found at S235. A phosphoserine mark is found at S239 and S243.

It belongs to the eIF-6 family. In terms of assembly, monomer. Associates with the 60S ribosomal subunit. Interacts with RACK1. Interacts with DICER1, AGO2, TARBP2, MOV10 and RPL7A; they form a large RNA-induced silencing complex (RISC). Post-translationally, phosphorylation at Ser-174 and Ser-175 by CSNK1D/CK1 promotes nuclear export. In terms of processing, ufmylated by UFL1.

It is found in the cytoplasm. It localises to the nucleus. Its subcellular location is the nucleolus. Functionally, binds to the 60S ribosomal subunit and prevents its association with the 40S ribosomal subunit to form the 80S initiation complex in the cytoplasm. Behaves as a stimulatory translation initiation factor downstream insulin/growth factors. Is also involved in ribosome biogenesis. Associates with pre-60S subunits in the nucleus and is involved in its nuclear export. Cytoplasmic release of TIF6 from 60S subunits and nuclear relocalization is promoted by a RACK1 (RACK1)-dependent protein kinase C activity. In tissues responsive to insulin, controls fatty acid synthesis and glycolysis by exerting translational control of adipogenic transcription factors such as CEBPB, CEBPD and ATF4 that have G/C rich or uORF in their 5'UTR. Required for ROS-dependent megakaryocyte maturation and platelets formation, controls the expression of mitochondrial respiratory chain genes involved in reactive oxygen species (ROS) synthesis. Involved in miRNA-mediated gene silencing by the RNA-induced silencing complex (RISC). Required for both miRNA-mediated translational repression and miRNA-mediated cleavage of complementary mRNAs by RISC. Modulates cell cycle progression and global translation of pre-B cells, its activation seems to be rate-limiting in tumorigenesis and tumor growth. This is Eukaryotic translation initiation factor 6 (Eif6) from Rattus norvegicus (Rat).